The chain runs to 156 residues: Endoribonuclease YbeY (156 aa).

Zn(2+) is bound by residues H122, H126, and H132.

It belongs to the endoribonuclease YbeY family. Zn(2+) is required as a cofactor.

Its subcellular location is the cytoplasm. Functionally, single strand-specific metallo-endoribonuclease involved in late-stage 70S ribosome quality control and in maturation of the 3' terminus of the 16S rRNA. This is Endoribonuclease YbeY from Geobacillus kaustophilus (strain HTA426).